A 408-amino-acid chain; its full sequence is Bone morphogenetic protein 4 (408 aa).

The signal sequence occupies residues 1–19; the sequence is MIPGNRMLMVVLLCQVLLG. Residues 20–292 constitute a propeptide that is removed on maturation; the sequence is GATDASLIPE…HTLTRRRAKR (273 aa). Ser91 is subject to Phosphoserine. The interval 91–113 is disordered; sequence SGEEEEEEQSQGTGLEYPERPAS. Asn144 and Asn209 each carry an N-linked (GlcNAc...) asparagine glycan. Residues 281–307 are disordered; sequence RGHTLTRRRAKRSPKHHPQRSRKKNKN. The segment covering 284 to 307 has biased composition (basic residues); it reads TLTRRRAKRSPKHHPQRSRKKNKN. 3 disulfide bridges follow: Cys308–Cys373, Cys337–Cys405, and Cys341–Cys407. Residues Asn350 and Asn365 are each glycosylated (N-linked (GlcNAc...) asparagine).

Belongs to the TGF-beta family. As to quaternary structure, homodimer; disulfide-linked. Interacts with GREM2. Part of a complex consisting of TWSG1 and CHRD. Interacts with the serine proteases, HTRA1 and HTRA3; the interaction with either inhibits BMP4-mediated signaling. The HTRA protease activity is required for this inhibition. Interacts with SOSTDC1. Interacts with FBN1 (via N-terminal domain) and FBN2. Interacts with type I receptor BMPR1A. Interacts with type II receptor BMPR2. Interacts with FSTL1; this interaction inhibits the activation of the BMP4/Smad1/5/8 signaling pathway. Interacts with SCUBE3. Interacts with TGFBR3.

The protein resides in the secreted. It localises to the extracellular space. Its subcellular location is the extracellular matrix. Its function is as follows. Growth factor of the TGF-beta superfamily that plays essential roles in many developmental processes, including neurogenesis, vascular development, angiogenesis and osteogenesis. Acts in concert with PTHLH/PTHRP to stimulate ductal outgrowth during embryonic mammary development and to inhibit hair follicle induction. Initiates the canonical BMP signaling cascade by associating with type I receptor BMPR1A and type II receptor BMPR2. Once all three components are bound together in a complex at the cell surface, BMPR2 phosphorylates and activates BMPR1A. In turn, BMPR1A propagates signal by phosphorylating SMAD1/5/8 that travel to the nucleus and act as activators and repressors of transcription of target genes. Positively regulates the expression of odontogenic development regulator MSX1 via inducing the IPO7-mediated import of SMAD1 to the nucleus. Required for MSX1-mediated mesenchymal molar tooth bud development beyond the bud stage, via promoting Wnt signaling. Acts as a positive regulator of odontoblast differentiation during mesenchymal tooth germ formation, expression is repressed during the bell stage by MSX1-mediated inhibition of CTNNB1 signaling. Able to induce its own expression in dental mesenchymal cells and also in the neighboring dental epithelial cells via an MSX1-mediated pathway. Can also signal through non-canonical BMP pathways such as ERK/MAP kinase, PI3K/Akt, or SRC cascades. For example, induces SRC phosphorylation which, in turn, activates VEGFR2, leading to an angiogenic response. The chain is Bone morphogenetic protein 4 from Rattus norvegicus (Rat).